Consider the following 422-residue polypeptide: Histidine--tRNA ligase (422 aa).

It belongs to the class-II aminoacyl-tRNA synthetase family. In terms of assembly, homodimer.

The protein resides in the cytoplasm. It carries out the reaction tRNA(His) + L-histidine + ATP = L-histidyl-tRNA(His) + AMP + diphosphate + H(+). The protein is Histidine--tRNA ligase of Syntrophomonas wolfei subsp. wolfei (strain DSM 2245B / Goettingen).